Here is a 639-residue protein sequence, read N- to C-terminus: 1-deoxy-D-xylulose-5-phosphate synthase (639 aa).

Thiamine diphosphate is bound by residues H79 and 120–122 (AHS). Residue D151 participates in Mg(2+) binding. Residues 152-153 (GA), N180, Y289, and E371 each bind thiamine diphosphate. N180 serves as a coordination point for Mg(2+).

Belongs to the transketolase family. DXPS subfamily. As to quaternary structure, homodimer. Mg(2+) serves as cofactor. It depends on thiamine diphosphate as a cofactor.

It catalyses the reaction D-glyceraldehyde 3-phosphate + pyruvate + H(+) = 1-deoxy-D-xylulose 5-phosphate + CO2. It functions in the pathway metabolic intermediate biosynthesis; 1-deoxy-D-xylulose 5-phosphate biosynthesis; 1-deoxy-D-xylulose 5-phosphate from D-glyceraldehyde 3-phosphate and pyruvate: step 1/1. Catalyzes the acyloin condensation reaction between C atoms 2 and 3 of pyruvate and glyceraldehyde 3-phosphate to yield 1-deoxy-D-xylulose-5-phosphate (DXP). The sequence is that of 1-deoxy-D-xylulose-5-phosphate synthase from Allorhizobium ampelinum (strain ATCC BAA-846 / DSM 112012 / S4) (Agrobacterium vitis (strain S4)).